The sequence spans 117 residues: Antimicrobial peptide AmAMP1 (117 aa).

An N-terminal signal peptide occupies residues 1-25 (MPSIRVLFVLLAVILLFMEVKMTSA). Residues 26 to 73 (ASIVKDVDEDETLENEDGEAMENSWPWHGVEDTSDYSDLSDLANSEKR) constitute a propeptide that is removed on maturation. Cystine bridges form between Cys76–Cys115, Cys85–Cys108, and Cys94–Cys112.

The protein belongs to the coral AMP family.

The protein localises to the secreted. Functionally, coral peptide that probably acts as an antimicrobial peptide in the surface mucous layer of planula larvae and likely also in adults. Shows moderate to high activity against some Gram-negative and Gram-positive bacteria (tested on E.coli, B.megaterium, S.aureus, E.aesturaii, B.algicola, Acinetobacter spec.). Does not show antibacterial activity against the coral pathogen V.coralliilyticus. The chain is Antimicrobial peptide AmAMP1 from Acropora millepora (Staghorn coral).